The chain runs to 335 residues: Glyceraldehyde-3-phosphate dehydrogenase 2 (335 aa).

Residues 13–14 (RI), aspartate 34, and methionine 79 contribute to the NAD(+) site. D-glyceraldehyde 3-phosphate-binding positions include 151–153 (SCT), threonine 182, 211–212 (TG), and arginine 234. Residue cysteine 152 is the Nucleophile of the active site. Asparagine 316 is an NAD(+) binding site.

Belongs to the glyceraldehyde-3-phosphate dehydrogenase family. Homotetramer.

Its subcellular location is the cytoplasm. It catalyses the reaction D-glyceraldehyde 3-phosphate + phosphate + NAD(+) = (2R)-3-phospho-glyceroyl phosphate + NADH + H(+). The protein operates within carbohydrate degradation; glycolysis; pyruvate from D-glyceraldehyde 3-phosphate: step 1/5. In terms of biological role, glyceraldehyde-3-phosphate dehydrogenase is a key enzyme in glycolysis that catalyzes the first step of the pathway by converting D-glyceraldehyde 3-phosphate (G3P) into 3-phospho-D-glyceroyl phosphate. This is Glyceraldehyde-3-phosphate dehydrogenase 2 (gapdh-2) from Danio rerio (Zebrafish).